Here is a 632-residue protein sequence, read N- to C-terminus: 1-deoxy-D-xylulose-5-phosphate synthase (632 aa).

Residues His-74 and 115 to 117 contribute to the thiamine diphosphate site; that span reads AHS. Asp-146 provides a ligand contact to Mg(2+). Thiamine diphosphate-binding positions include 147 to 148, Asn-176, Tyr-283, and Glu-365; that span reads GA. Asn-176 serves as a coordination point for Mg(2+).

The protein belongs to the transketolase family. DXPS subfamily. Homodimer. It depends on Mg(2+) as a cofactor. Thiamine diphosphate is required as a cofactor.

The catalysed reaction is D-glyceraldehyde 3-phosphate + pyruvate + H(+) = 1-deoxy-D-xylulose 5-phosphate + CO2. The protein operates within metabolic intermediate biosynthesis; 1-deoxy-D-xylulose 5-phosphate biosynthesis; 1-deoxy-D-xylulose 5-phosphate from D-glyceraldehyde 3-phosphate and pyruvate: step 1/1. Functionally, catalyzes the acyloin condensation reaction between C atoms 2 and 3 of pyruvate and glyceraldehyde 3-phosphate to yield 1-deoxy-D-xylulose-5-phosphate (DXP). In Paraburkholderia phymatum (strain DSM 17167 / CIP 108236 / LMG 21445 / STM815) (Burkholderia phymatum), this protein is 1-deoxy-D-xylulose-5-phosphate synthase.